A 269-amino-acid polypeptide reads, in one-letter code: NAD kinase (269 aa).

Aspartate 45 serves as the catalytic Proton acceptor. Residues 45-46, 122-123, arginine 149, aspartate 151, and alanine 186 contribute to the NAD(+) site; these read DG and NE.

Belongs to the NAD kinase family. The cofactor is a divalent metal cation.

The protein localises to the cytoplasm. The catalysed reaction is NAD(+) + ATP = ADP + NADP(+) + H(+). In terms of biological role, involved in the regulation of the intracellular balance of NAD and NADP, and is a key enzyme in the biosynthesis of NADP. Catalyzes specifically the phosphorylation on 2'-hydroxyl of the adenosine moiety of NAD to yield NADP. This chain is NAD kinase, found in Staphylococcus aureus (strain Mu3 / ATCC 700698).